A 164-amino-acid chain; its full sequence is Small ribosomal subunit protein uS5 (164 aa).

An S5 DRBM domain is found at 10-73 (LEERVVAINR…EAAKKNLIEV (64 aa)).

This sequence belongs to the universal ribosomal protein uS5 family. As to quaternary structure, part of the 30S ribosomal subunit. Contacts proteins S4 and S8.

With S4 and S12 plays an important role in translational accuracy. Its function is as follows. Located at the back of the 30S subunit body where it stabilizes the conformation of the head with respect to the body. The chain is Small ribosomal subunit protein uS5 from Streptococcus thermophilus (strain CNRZ 1066).